We begin with the raw amino-acid sequence, 250 residues long: MSDDSRPSPSGARTAAVIPAAGRGVRLGPGAPKALRALNGTPMLIHAVRAMAASRAVSLVVVVAPPDGTAEVKSLLDAHALPERTDFVVVPGGESRQESVKLGLDALPPGIDIVLVHDAARPLVPVDTVDAVIEAVRDGAPAVVPALPLADTVKQVEPAAVPGEPEPVVATPERARLRAVQTPQGFDRDTLVRAHETVTDNVTDDASMVEQLGARVVVVPGHEEAFKVTRPLDLVLAEAVLARRRLNDGF.

This sequence belongs to the IspD/TarI cytidylyltransferase family. IspD subfamily.

It carries out the reaction 2-C-methyl-D-erythritol 4-phosphate + CTP + H(+) = 4-CDP-2-C-methyl-D-erythritol + diphosphate. Its pathway is isoprenoid biosynthesis; isopentenyl diphosphate biosynthesis via DXP pathway; isopentenyl diphosphate from 1-deoxy-D-xylulose 5-phosphate: step 2/6. Functionally, catalyzes the formation of 4-diphosphocytidyl-2-C-methyl-D-erythritol from CTP and 2-C-methyl-D-erythritol 4-phosphate (MEP). The chain is 2-C-methyl-D-erythritol 4-phosphate cytidylyltransferase from Streptomyces avermitilis (strain ATCC 31267 / DSM 46492 / JCM 5070 / NBRC 14893 / NCIMB 12804 / NRRL 8165 / MA-4680).